The following is a 185-amino-acid chain: uncharacterized protein (185 aa).

The first 29 residues, 1–29 (MKLFSRTSLVALGTAAAITLSGVTAPAFA), serve as a signal peptide directing secretion. Residues 41–66 (KTAEDNTPEAPGASTPLKLEQPGTIT) are disordered.

Glycosylated; by Pmt.

Its subcellular location is the secreted. This is an uncharacterized protein from Corynebacterium glutamicum (strain ATCC 13032 / DSM 20300 / JCM 1318 / BCRC 11384 / CCUG 27702 / LMG 3730 / NBRC 12168 / NCIMB 10025 / NRRL B-2784 / 534).